The sequence spans 227 residues: Cytochrome c oxidase subunit 2 (227 aa).

At 1–14 (MAYSFQLGLQDATS) the chain is on the mitochondrial intermembrane side. The chain crosses the membrane as a helical span at residues 15–45 (PIMEELMNFHDHTLMIVFLISSLVLYIISLM). The Mitochondrial matrix segment spans residues 46 to 59 (LTTKLTHTSTMDAQ). The chain crosses the membrane as a helical span at residues 60 to 87 (EVETIWTILPAVILIMIALPSLRILYMM). Residues 88–227 (DEINNPVLTV…HFENWSASMI (140 aa)) are Mitochondrial intermembrane-facing. Histidine 161, cysteine 196, glutamate 198, cysteine 200, histidine 204, and methionine 207 together coordinate Cu cation. Residue glutamate 198 coordinates Mg(2+).

It belongs to the cytochrome c oxidase subunit 2 family. In terms of assembly, component of the cytochrome c oxidase (complex IV, CIV), a multisubunit enzyme composed of 14 subunits. The complex is composed of a catalytic core of 3 subunits MT-CO1, MT-CO2 and MT-CO3, encoded in the mitochondrial DNA, and 11 supernumerary subunits COX4I, COX5A, COX5B, COX6A, COX6B, COX6C, COX7A, COX7B, COX7C, COX8 and NDUFA4, which are encoded in the nuclear genome. The complex exists as a monomer or a dimer and forms supercomplexes (SCs) in the inner mitochondrial membrane with NADH-ubiquinone oxidoreductase (complex I, CI) and ubiquinol-cytochrome c oxidoreductase (cytochrome b-c1 complex, complex III, CIII), resulting in different assemblies (supercomplex SCI(1)III(2)IV(1) and megacomplex MCI(2)III(2)IV(2)). Found in a complex with TMEM177, COA6, COX18, COX20, SCO1 and SCO2. Interacts with TMEM177 in a COX20-dependent manner. Interacts with COX20. Interacts with COX16. Cu cation is required as a cofactor.

Its subcellular location is the mitochondrion inner membrane. The enzyme catalyses 4 Fe(II)-[cytochrome c] + O2 + 8 H(+)(in) = 4 Fe(III)-[cytochrome c] + 2 H2O + 4 H(+)(out). Component of the cytochrome c oxidase, the last enzyme in the mitochondrial electron transport chain which drives oxidative phosphorylation. The respiratory chain contains 3 multisubunit complexes succinate dehydrogenase (complex II, CII), ubiquinol-cytochrome c oxidoreductase (cytochrome b-c1 complex, complex III, CIII) and cytochrome c oxidase (complex IV, CIV), that cooperate to transfer electrons derived from NADH and succinate to molecular oxygen, creating an electrochemical gradient over the inner membrane that drives transmembrane transport and the ATP synthase. Cytochrome c oxidase is the component of the respiratory chain that catalyzes the reduction of oxygen to water. Electrons originating from reduced cytochrome c in the intermembrane space (IMS) are transferred via the dinuclear copper A center (CU(A)) of subunit 2 and heme A of subunit 1 to the active site in subunit 1, a binuclear center (BNC) formed by heme A3 and copper B (CU(B)). The BNC reduces molecular oxygen to 2 water molecules using 4 electrons from cytochrome c in the IMS and 4 protons from the mitochondrial matrix. The chain is Cytochrome c oxidase subunit 2 (MT-CO2) from Praomys jacksoni (African forest rat).